The sequence spans 1014 residues: Valine--tRNA ligase (1014 aa).

A 'HIGH' region motif is present at residues Pro49 to His59. Residues Lys542 to Ser546 carry the 'KMSKS' region motif. Residue Lys545 coordinates ATP. A coiled-coil region spans residues Val947 to Val1014.

It belongs to the class-I aminoacyl-tRNA synthetase family. ValS type 1 subfamily. Monomer.

It is found in the cytoplasm. The catalysed reaction is tRNA(Val) + L-valine + ATP = L-valyl-tRNA(Val) + AMP + diphosphate. In terms of biological role, catalyzes the attachment of valine to tRNA(Val). As ValRS can inadvertently accommodate and process structurally similar amino acids such as threonine, to avoid such errors, it has a 'posttransfer' editing activity that hydrolyzes mischarged Thr-tRNA(Val) in a tRNA-dependent manner. This Nostoc sp. (strain PCC 7120 / SAG 25.82 / UTEX 2576) protein is Valine--tRNA ligase.